Reading from the N-terminus, the 891-residue chain is Echinoderm microtubule-associated protein-like elp-1 (891 aa).

Residues 77 to 88 are compositionally biased toward polar residues; sequence DQSRSPTCSGYS. The disordered stretch occupies residues 77–167; sequence DQSRSPTCSG…ARGSPMRKWV (91 aa). Over residues 104-117 the composition is skewed to low complexity; the sequence is SPSHAPPRSSHANS. Polar residues predominate over residues 118–131; it reads KSLYINGMNNNSEE. 9 WD repeats span residues 330–401, 404–447, 499–537, 541–579, 626–664, 708–747, 753–792, 816–853, and 859–890; these read GHTC…TLMV, GFEK…REGE, DKPKTVLSMCFGENDQVVTGDSNGTISIWDPRTCKTTKQ, VHPGGVYSLTLAKSGKILSGGKDRMVSEWDLQDLVRTRR, GDPGNLTFLLTCSSNQLITSSQCGTLRIWNHIDKKVEFS, EGTAPITAVKFAPSGATFAVATKDPHLTIYRIDASKNLLV, HIPAPIVALDFSSDSQYLRGQSIGAHLLFWTKAGEICDGT, SSNGQVTAVAQCEDISACGMENGTIRIYKNPVTSVTAG, and GHGRIIKSVAFSNKIQLFSCSPTDNSVFEWCL.

Belongs to the WD repeat EMAP family.

It is found in the cytoplasm. The protein localises to the cytoskeleton. In terms of biological role, may modify the assembly dynamics of microtubules, such that microtubules are slightly longer, but more dynamic. In Caenorhabditis elegans, this protein is Echinoderm microtubule-associated protein-like elp-1 (elp-1).